The sequence spans 158 residues: Ribonuclease H (158 aa).

One can recognise an RNase H type-1 domain in the interval 2-143 (PEKIIELFTD…VDALLNRVMD (142 aa)). 4 residues coordinate Mg(2+): D11, E49, D71, and D135.

This sequence belongs to the RNase H family. Monomer. Requires Mg(2+) as cofactor.

The protein localises to the cytoplasm. It catalyses the reaction Endonucleolytic cleavage to 5'-phosphomonoester.. Functionally, endonuclease that specifically degrades the RNA of RNA-DNA hybrids. This chain is Ribonuclease H, found in Acidithiobacillus ferrooxidans (strain ATCC 23270 / DSM 14882 / CIP 104768 / NCIMB 8455) (Ferrobacillus ferrooxidans (strain ATCC 23270)).